Here is an 811-residue protein sequence, read N- to C-terminus: Elongation factor G, mitochondrial (811 aa).

Residues 1–64 (MSAIARAAAR…FQQSFQRRWA (64 aa)) constitute a mitochondrion transit peptide. One can recognise a tr-type G domain in the interval 96 to 394 (RRQRNVGISA…GVCAYLPNPS (299 aa)). Residues 105-112 (AHIDSGKT), 192-196 (DTPGH), and 246-249 (NKMD) contribute to the GTP site.

Belongs to the TRAFAC class translation factor GTPase superfamily. Classic translation factor GTPase family. EF-G/EF-2 subfamily.

Its subcellular location is the mitochondrion. Its pathway is protein biosynthesis; polypeptide chain elongation. Its function is as follows. Mitochondrial GTPase that catalyzes the GTP-dependent ribosomal translocation step during translation elongation. During this step, the ribosome changes from the pre-translocational (PRE) to the post-translocational (POST) state as the newly formed A-site-bound peptidyl-tRNA and P-site-bound deacylated tRNA move to the P and E sites, respectively. Catalyzes the coordinated movement of the two tRNA molecules, the mRNA and conformational changes in the ribosome. The sequence is that of Elongation factor G, mitochondrial from Cryptococcus neoformans var. neoformans serotype D (strain B-3501A) (Filobasidiella neoformans).